We begin with the raw amino-acid sequence, 66 residues long: Large ribosomal subunit protein uL29 (66 aa).

Belongs to the universal ribosomal protein uL29 family.

The polypeptide is Large ribosomal subunit protein uL29 (Sinorhizobium fredii (strain NBRC 101917 / NGR234)).